The sequence spans 253 residues: uncharacterized protein (253 aa).

Residues 175-184 (NPTQTSPGKP) are compositionally biased toward polar residues. The interval 175–253 (NPTQTSPGKP…ATENEDRLPS (79 aa)) is disordered. Position 180 is a phosphoserine (Ser-180). Low complexity-rich tracts occupy residues 185 to 196 (STSESSQTDTST) and 203 to 214 (TPTTTRASSYTT). Residues 215 to 242 (LVSTSNQVSNEAEASAVETSANQAQNTE) show a composition bias toward polar residues.

Belongs to the TRAPP small subunits family. BET3 subfamily.

This is an uncharacterized protein from Schizosaccharomyces pombe (strain 972 / ATCC 24843) (Fission yeast).